Here is a 207-residue protein sequence, read N- to C-terminus: LexA repressor (207 aa).

Positions 28-48 (RAEIARRLGFKSPNAAEEHLK) form a DNA-binding region, H-T-H motif. Catalysis depends on for autocatalytic cleavage activity residues serine 126 and lysine 163.

It belongs to the peptidase S24 family. In terms of assembly, homodimer.

It catalyses the reaction Hydrolysis of Ala-|-Gly bond in repressor LexA.. In terms of biological role, represses a number of genes involved in the response to DNA damage (SOS response), including recA and lexA. In the presence of single-stranded DNA, RecA interacts with LexA causing an autocatalytic cleavage which disrupts the DNA-binding part of LexA, leading to derepression of the SOS regulon and eventually DNA repair. In Marinomonas sp. (strain MWYL1), this protein is LexA repressor.